Here is a 185-residue protein sequence, read N- to C-terminus: Large ribosomal subunit protein bL12c (185 aa).

The transit peptide at Met1–Val47 directs the protein to the chloroplast.

Belongs to the bacterial ribosomal protein bL12 family.

The protein localises to the plastid. The protein resides in the chloroplast. The sequence is that of Large ribosomal subunit protein bL12c (RPL12-2) from Oryza sativa subsp. japonica (Rice).